Reading from the N-terminus, the 512-residue chain is 2-isopropylmalate synthase (512 aa).

Residues 5–268 form the Pyruvate carboxyltransferase domain; it reads LIIFDTTLRD…ELGIDTQHIV (264 aa). Mn(2+) is bound by residues aspartate 14, histidine 202, histidine 204, and asparagine 239. The interval 394–512 is regulatory domain; sequence GFVSLSQRSE…SKAERVAAQG (119 aa).

Belongs to the alpha-IPM synthase/homocitrate synthase family. LeuA type 1 subfamily. In terms of assembly, homodimer. The cofactor is Mn(2+).

The protein localises to the cytoplasm. It carries out the reaction 3-methyl-2-oxobutanoate + acetyl-CoA + H2O = (2S)-2-isopropylmalate + CoA + H(+). Its pathway is amino-acid biosynthesis; L-leucine biosynthesis; L-leucine from 3-methyl-2-oxobutanoate: step 1/4. Its function is as follows. Catalyzes the condensation of the acetyl group of acetyl-CoA with 3-methyl-2-oxobutanoate (2-ketoisovalerate) to form 3-carboxy-3-hydroxy-4-methylpentanoate (2-isopropylmalate). This Paracidovorax citrulli (strain AAC00-1) (Acidovorax citrulli) protein is 2-isopropylmalate synthase.